The sequence spans 520 residues: Maturase K (520 aa).

Belongs to the intron maturase 2 family. MatK subfamily.

It localises to the plastid. The protein resides in the chloroplast. In terms of biological role, usually encoded in the trnK tRNA gene intron. Probably assists in splicing its own and other chloroplast group II introns. The sequence is that of Maturase K from Aspidistra elatior (Cast-iron plant).